A 235-amino-acid chain; its full sequence is Aspartate/glutamate leucyltransferase (235 aa).

It belongs to the R-transferase family. Bpt subfamily.

The protein localises to the cytoplasm. The catalysed reaction is N-terminal L-glutamyl-[protein] + L-leucyl-tRNA(Leu) = N-terminal L-leucyl-L-glutamyl-[protein] + tRNA(Leu) + H(+). It catalyses the reaction N-terminal L-aspartyl-[protein] + L-leucyl-tRNA(Leu) = N-terminal L-leucyl-L-aspartyl-[protein] + tRNA(Leu) + H(+). Functionally, functions in the N-end rule pathway of protein degradation where it conjugates Leu from its aminoacyl-tRNA to the N-termini of proteins containing an N-terminal aspartate or glutamate. This is Aspartate/glutamate leucyltransferase from Pseudomonas putida (strain ATCC 700007 / DSM 6899 / JCM 31910 / BCRC 17059 / LMG 24140 / F1).